A 338-amino-acid chain; its full sequence is MNVFYDKDADLSLIKGKQVTIIGYGSQGHAHALNLKDSGVNVTVGLRKGGASWSKAENAGLSVKEVAEAVKGADVVMMLLPDEQIADVYAKEVHANIKQGAALAFAHGFNVHYGQVIPRADLDVIMIAPKAPGHTVRGTYSQGGGVPHLIAVAQNKSGAARDIALSYAAANGGGRAGIIETNFREETETDLFGEQAVLCGGTVELIKAGFETLVEAGYAPEMAYFECLHELKLIVDLIYEGGIANMNYSISNNAEYGEYVTGPRVVTEETKKAMKQCLTDIQTGEYAKSFILENKAGAPTLQSRRRLTAEHQIEQVGAKLRAMMPWIAKNKLVDQTKN.

Residues 1–181 (MNVFYDKDAD…GGGRAGIIET (181 aa)) form the KARI N-terminal Rossmann domain. Residues 24 to 27 (YGSQ), R47, and S52 contribute to the NADP(+) site. H107 is an active-site residue. G133 provides a ligand contact to NADP(+). The region spanning 182–327 (NFREETETDL…AKLRAMMPWI (146 aa)) is the KARI C-terminal knotted domain. Residues D190, E194, E226, and E230 each coordinate Mg(2+). Substrate is bound at residue S251.

The protein belongs to the ketol-acid reductoisomerase family. It depends on Mg(2+) as a cofactor.

It carries out the reaction (2R)-2,3-dihydroxy-3-methylbutanoate + NADP(+) = (2S)-2-acetolactate + NADPH + H(+). The catalysed reaction is (2R,3R)-2,3-dihydroxy-3-methylpentanoate + NADP(+) = (S)-2-ethyl-2-hydroxy-3-oxobutanoate + NADPH + H(+). The protein operates within amino-acid biosynthesis; L-isoleucine biosynthesis; L-isoleucine from 2-oxobutanoate: step 2/4. It functions in the pathway amino-acid biosynthesis; L-valine biosynthesis; L-valine from pyruvate: step 2/4. In terms of biological role, involved in the biosynthesis of branched-chain amino acids (BCAA). Catalyzes an alkyl-migration followed by a ketol-acid reduction of (S)-2-acetolactate (S2AL) to yield (R)-2,3-dihydroxy-isovalerate. In the isomerase reaction, S2AL is rearranged via a Mg-dependent methyl migration to produce 3-hydroxy-3-methyl-2-ketobutyrate (HMKB). In the reductase reaction, this 2-ketoacid undergoes a metal-dependent reduction by NADPH to yield (R)-2,3-dihydroxy-isovalerate. The polypeptide is Ketol-acid reductoisomerase (NADP(+)) (Burkholderia cenocepacia (strain HI2424)).